The following is a 212-amino-acid chain: Cytidylate kinase (212 aa).

7 to 15 (GPAASGKGT) lines the ATP pocket.

This sequence belongs to the cytidylate kinase family. Type 1 subfamily.

It is found in the cytoplasm. The enzyme catalyses CMP + ATP = CDP + ADP. It catalyses the reaction dCMP + ATP = dCDP + ADP. In Rhodopseudomonas palustris (strain HaA2), this protein is Cytidylate kinase.